The chain runs to 896 residues: Vacuolar zinc transporter TgZnT (896 aa).

The Cytoplasmic segment spans residues 1–472; that stretch reads MPFSCFVFSQ…ETGTQRARRK (472 aa). The segment covering 82–91 has biased composition (basic and acidic residues); sequence VLSSRGDESV. Disordered stretches follow at residues 82–104, 205–227, and 255–329; these read VLSS…SPGF, MKEI…RPCA, and SSSC…SSAS. Low complexity-rich tracts occupy residues 210–225 and 255–266; these read SPRS…SSRP and SSSCCSRSNSSS. A compositionally biased stretch (basic and acidic residues) spans 303 to 322; sequence VHERRAEATCCAPRDRHGGD. Residues 473-493 form a helical membrane-spanning segment; the sequence is LVMASMVCCVFMFVEIVAGVL. Topologically, residues 494-502 are vacuolar; that stretch reads ANSLALMTD. Residues 503–523 form a helical membrane-spanning segment; sequence ASHLLSDLCAFLISLFALWVS. Topologically, residues 524-539 are cytoplasmic; that stretch reads ELKGNPSMSFGYHRAE. The chain crosses the membrane as a helical span at residues 540–560; that stretch reads ILGALLSVFLIWVLTAVLIYA. The Vacuolar portion of the chain corresponds to 561 to 573; the sequence is ACFRLVDPPQVDG. A helical membrane pass occupies residues 574 to 594; that stretch reads ELMFWTALLGTLANLFMTHIL. Over 595-737 the chain is Cytoplasmic; it reads KVHSHGIGQV…YENMNLRAAY (143 aa). A disordered region spans residues 621–707; that stretch reads LQASSSSPEK…RPFSASSAGS (87 aa). Residues 656-680 are compositionally biased toward basic and acidic residues; sequence RDAEAGRDAEAGRDAEAGRDAETGR. A helical membrane pass occupies residues 738–758; sequence IHALGDLLQNIGVMIASALIW. Topologically, residues 759–762 are vacuolar; the sequence is WRPD. Residues 763–783 traverse the membrane as a helical segment; it reads WAIADPICTFIFSIFVLFTTL. The Cytoplasmic portion of the chain corresponds to 784–896; the sequence is SILKEALNVL…CSDPMKVFRR (113 aa).

It belongs to the cation diffusion facilitator (CDF) transporter (TC 2.A.4) family. SLC30A subfamily.

The protein localises to the vacuole membrane. Its subcellular location is the cytoplasmic vesicle membrane. In terms of biological role, vacuolar zinc transporter that is probably involved in the transfer of zinc ions from the cytosol to the vacuole for intracellular storage. Plays an essential role in extracellular zinc tolerance. The sequence is that of Vacuolar zinc transporter TgZnT from Toxoplasma gondii (strain ATCC 50853 / GT1).